Reading from the N-terminus, the 525-residue chain is Glutamate--cysteine ligase (525 aa).

This sequence belongs to the glutamate--cysteine ligase type 1 family. Type 1 subfamily.

It catalyses the reaction L-cysteine + L-glutamate + ATP = gamma-L-glutamyl-L-cysteine + ADP + phosphate + H(+). It participates in sulfur metabolism; glutathione biosynthesis; glutathione from L-cysteine and L-glutamate: step 1/2. The protein is Glutamate--cysteine ligase of Vibrio vulnificus (strain YJ016).